Reading from the N-terminus, the 463-residue chain is T-box transcription factor TBX1-A (463 aa).

2 disordered regions span residues 39-58 and 75-104; these read SPSPGDPYSQHEPHYEPCSA and GASSSSCASSTPGSGSTGSSSSNKAPVKKN. The span at 75–96 shows a compositional bias: low complexity; that stretch reads GASSSSCASSTPGSGSTGSSSS. Residues 119–297 constitute a DNA-binding region (T-box); that stretch reads LWDEFNQLGT…SNPFAKGFRD (179 aa). Disordered regions lie at residues 320 to 354 and 377 to 409; these read RSRNPVSSPTQNGSDKDGDGRREYERDASGTPLHG and VPLSTGRPSPPHELRLDPHSQGSEPLHHHPYKY. Residues 323–332 show a composition bias toward polar residues; it reads NPVSSPTQNG. Residues 333–347 are compositionally biased toward basic and acidic residues; sequence SDKDGDGRREYERDA. Residues 420–431 carry the Nuclear localization signal motif; sequence KTRPAPYPLPTI.

Binds DNA as a dimer. Interacts with dscr6/ripply3.

The protein resides in the nucleus. Probable transcriptional regulator involved in developmental processes. Binds to the palindromic T site 5'-TTCACACCTAGGTGTGAA-3' DNA sequence. Induces pre-placodal ectoderm (PPE) gene expression in regions where RIPPLY3 is absent. Plays a role in the formation of the anteroposterior (AP) axis during embryonic development; required to establish the posterolateral border of the pre-placodal ectoderm (PPE) acting downstream of the retinoic acid receptor (RAR) signaling. The polypeptide is T-box transcription factor TBX1-A (tbx1-a) (Xenopus laevis (African clawed frog)).